A 178-amino-acid polypeptide reads, in one-letter code: Crossover junction endodeoxyribonuclease RuvC (178 aa).

Active-site residues include Asp7, Glu68, and Asp141. Mg(2+) contacts are provided by Asp7, Glu68, and Asp141.

It belongs to the RuvC family. Homodimer which binds Holliday junction (HJ) DNA. The HJ becomes 2-fold symmetrical on binding to RuvC with unstacked arms; it has a different conformation from HJ DNA in complex with RuvA. In the full resolvosome a probable DNA-RuvA(4)-RuvB(12)-RuvC(2) complex forms which resolves the HJ. It depends on Mg(2+) as a cofactor.

It is found in the cytoplasm. It carries out the reaction Endonucleolytic cleavage at a junction such as a reciprocal single-stranded crossover between two homologous DNA duplexes (Holliday junction).. The RuvA-RuvB-RuvC complex processes Holliday junction (HJ) DNA during genetic recombination and DNA repair. Endonuclease that resolves HJ intermediates. Cleaves cruciform DNA by making single-stranded nicks across the HJ at symmetrical positions within the homologous arms, yielding a 5'-phosphate and a 3'-hydroxyl group; requires a central core of homology in the junction. The consensus cleavage sequence is 5'-(A/T)TT(C/G)-3'. Cleavage occurs on the 3'-side of the TT dinucleotide at the point of strand exchange. HJ branch migration catalyzed by RuvA-RuvB allows RuvC to scan DNA until it finds its consensus sequence, where it cleaves and resolves the cruciform DNA. This is Crossover junction endodeoxyribonuclease RuvC from Parafrankia sp. (strain EAN1pec).